Consider the following 325-residue polypeptide: DNA-directed RNA polymerase subunit alpha (325 aa).

Residues 1–238 (MSLKSLLKGF…EHLTVFINFE (238 aa)) form an alpha N-terminal domain (alpha-NTD) region. The segment at 255-325 (LKASLSKHVE…LGLSFGMRDF (71 aa)) is alpha C-terminal domain (alpha-CTD).

It belongs to the RNA polymerase alpha chain family. Homodimer. The RNAP catalytic core consists of 2 alpha, 1 beta, 1 beta' and 1 omega subunit. When a sigma factor is associated with the core the holoenzyme is formed, which can initiate transcription.

It catalyses the reaction RNA(n) + a ribonucleoside 5'-triphosphate = RNA(n+1) + diphosphate. In terms of biological role, DNA-dependent RNA polymerase catalyzes the transcription of DNA into RNA using the four ribonucleoside triphosphates as substrates. In Leptospira interrogans serogroup Icterohaemorrhagiae serovar copenhageni (strain Fiocruz L1-130), this protein is DNA-directed RNA polymerase subunit alpha.